A 251-amino-acid polypeptide reads, in one-letter code: 3-deoxy-manno-octulosonate cytidylyltransferase (251 aa).

It belongs to the KdsB family.

It localises to the cytoplasm. It carries out the reaction 3-deoxy-alpha-D-manno-oct-2-ulosonate + CTP = CMP-3-deoxy-beta-D-manno-octulosonate + diphosphate. It participates in nucleotide-sugar biosynthesis; CMP-3-deoxy-D-manno-octulosonate biosynthesis; CMP-3-deoxy-D-manno-octulosonate from 3-deoxy-D-manno-octulosonate and CTP: step 1/1. It functions in the pathway bacterial outer membrane biogenesis; lipopolysaccharide biosynthesis. Functionally, activates KDO (a required 8-carbon sugar) for incorporation into bacterial lipopolysaccharide in Gram-negative bacteria. The protein is 3-deoxy-manno-octulosonate cytidylyltransferase of Chlorobium luteolum (strain DSM 273 / BCRC 81028 / 2530) (Pelodictyon luteolum).